The following is a 77-amino-acid chain: Small ribosomal subunit protein bS16 (77 aa).

Belongs to the bacterial ribosomal protein bS16 family.

The polypeptide is Small ribosomal subunit protein bS16 (Helicobacter hepaticus (strain ATCC 51449 / 3B1)).